Reading from the N-terminus, the 223-residue chain is Small ribosomal subunit protein uS3 (223 aa).

The KH type-2 domain occupies 39 to 115 (IRKYIEKNLA…RVFINIVEIK (77 aa)).

The protein belongs to the universal ribosomal protein uS3 family. Part of the 30S ribosomal subunit. Forms a tight complex with proteins S10 and S14.

Binds the lower part of the 30S subunit head. Binds mRNA in the 70S ribosome, positioning it for translation. The protein is Small ribosomal subunit protein uS3 of Leuconostoc mesenteroides subsp. mesenteroides (strain ATCC 8293 / DSM 20343 / BCRC 11652 / CCM 1803 / JCM 6124 / NCDO 523 / NBRC 100496 / NCIMB 8023 / NCTC 12954 / NRRL B-1118 / 37Y).